The primary structure comprises 902 residues: Histone-lysine N-methyltransferase CLF (902 aa).

Positions 1–14 (MASEASPSSSATRS) are enriched in low complexity. Disordered stretches follow at residues 1 to 33 (MASEASPSSSATRSEPPKDSPAEERGPASKEVS), 73 to 107 (SMERGGSCKDGSDLLVKRQRDSPGMKSGIDESNNN), and 335 to 522 (GKTG…FMGE). 2 stretches are compositionally biased toward basic and acidic residues: residues 15 to 33 (EPPKDSPAEERGPASKEVS) and 78 to 95 (GSCKDGSDLLVKRQRDSP). Over residues 337–357 (TGTSSDGAGTKTTPTKFSSKL) the composition is skewed to polar residues. Over residues 394–403 (DKVSSSPKVK) the composition is skewed to low complexity. Residues 404 to 416 (GSGRRVGRKRNKN) show a composition bias toward basic residues. Residues 438-449 (SDSIASGSCSPS) show a composition bias toward low complexity. A compositionally biased stretch (polar residues) spans 459–473 (ATSSSQKHVKSGNSG). The SANT domain maps to 531–581 (TNKLWRPLEKSLFDKGVEIFGMNSCLIARNLLSGFKSCWEVFQYMTCSENK). A CXC domain is found at 638-737 (RKRITEKKDQ…SLGVPSQRGD (100 aa)). The region spanning 752-867 (QRVLLGISDV…AGEELFYDYR (116 aa)) is the SET domain. Tyrosine 866 provides a ligand contact to S-adenosyl-L-methionine. Over residues 875 to 890 (AWAKKPEAPGSKKDEN) the composition is skewed to basic and acidic residues. The disordered stretch occupies residues 875–902 (AWAKKPEAPGSKKDENVTPSVGRPKKLA).

Belongs to the class V-like SAM-binding methyltransferase superfamily. Histone-lysine methyltransferase family. EZ subfamily. As to quaternary structure, probable component of a PcG complex. In plants, PcG complexes are probably composed of a member of the EZ family (CLF or MEA), FIE, and a member of the VEFS family (FIS2, VRN2 or EMF2). Interacts with FIE. Interacts with RING1A. Binds to ALP1. Interacts with BLI. Binds to ATX1 in the nucleus. Interacts with EOL1. Interacts (via SANT domain) with HXK1 in the nucleus. Strongly expressed throughout the apical meristem, leaf primordia, and leaves of 7-8 day-old seedling. Weakly expressed in the vasculature of hypocotyl. Strongly expressed throughout the young stages 1 and 2 floral meristems that arose on the flanks of the apex. In stage 3 and 4 flowers, it is expressed in the emerging sepal primordia and in the dome of the floral meristem. During stages 6 and 7, it is strongly expressed in developing petal and stamen, and weakly expressed in the sepals. Late in floral development, at stage 12, it is weakly expressed in all floral whorls, and expressed at intermediate level in petals and ovules.

The protein resides in the nucleus. The enzyme catalyses L-lysyl-[histone] + S-adenosyl-L-methionine = N(6)-methyl-L-lysyl-[histone] + S-adenosyl-L-homocysteine + H(+). Functionally, polycomb group (PcG) protein. Catalytic subunit of some PcG multiprotein complex, which methylates 'Lys-27' of histone H3, leading to transcriptional repression of the affected target genes, mainly abscisic acid (ABA) responsive elements. Required to regulate floral development by repressing the AGAMOUS homeotic gene in leaves, inflorescence stems and flowers. Together with ATX1, modulates AG nucleosome methylation statement. Regulates the antero-posterior organization of the endosperm, as well as the division and elongation rates of leaf cells. PcG proteins act by forming multiprotein complexes, which are required to maintain the transcriptionally repressive state of homeotic genes throughout development. PcG proteins are not required to initiate repression, but to maintain it during later stages of development. Forms a nuclear complex with EZA1/SWN and HXK1 to target common glucose-responsive genes and regulate glucose signaling by glucose-mediated gene repression. Affects the recruitment of HXK1 to the target chromatin. This Arabidopsis thaliana (Mouse-ear cress) protein is Histone-lysine N-methyltransferase CLF.